The primary structure comprises 711 residues: Catalase HPII (711 aa).

Residues 1–10 (MPSKKTDAPK) show a composition bias toward basic and acidic residues. Positions 1 to 27 (MPSKKTDAPKQSEAAGTQTPDRANTNA) are disordered. Residues 14–27 (AAGTQTPDRANTNA) show a composition bias toward polar residues. Residues His92 and Asn165 contribute to the active site. Residue Tyr379 coordinates heme.

The protein belongs to the catalase family. HPII subfamily. It depends on heme as a cofactor.

Its subcellular location is the cytoplasm. The catalysed reaction is 2 H2O2 = O2 + 2 H2O. Its function is as follows. Decomposes hydrogen peroxide into water and oxygen; serves to protect cells from the toxic effects of hydrogen peroxide. The chain is Catalase HPII (katE) from Pseudomonas putida (Arthrobacter siderocapsulatus).